Consider the following 481-residue polypeptide: MASVGPVKTKTVTLKELTPPIPSPEKSACKGAKPDSNHMALVPVKPSQPGSGKLITRTRLQRDSLISQQQRDALVVSSFGIGTTRHGQPDNTTSSIKDGFSTAAGGVNCASVVVAQSEKDSVRFHLCVDALAEGCVNTFIHLFHLSHRDPVCVDQLAQTLFTIPDEKLVWVKSQLAAVEVLRRQSEFRDVCERCQLLADYFESERDCDEAAWHYDVALRIAMESLDRPLEQEVRLSFGAFFERHKQLRKAIALFEEVYHLAMALNDVETAVEANYRLIRTYLSLSAELKDTNPKEAISFLERALDMSQRVKSSKDEADSLHALGNIYESMGDFRRALEYQKRFFEVARAANLVEREKRASLCVASMQERMNMTDEAVHSLQCALELSEKAADIEGVYRATMQLGQAYDSSGDHEKALMSYRANFGAARKLNNSDLTDQARVALGFALGEHYLKHAGGGRGYVPIVCDDVKAQLEWMSNGIL.

The span at 1 to 18 (MASVGPVKTKTVTLKELT) shows a compositional bias: low complexity. Residues 1 to 53 (MASVGPVKTKTVTLKELTPPIPSPEKSACKGAKPDSNHMALVPVKPSQPGSGK) are disordered. TPR repeat units lie at residues 191-224 (CERCQLLADYFESERDCDEAAWHYDVALRIAMES), 231-264 (QEVRLSFGAFFERHKQLRKAIALFEEVYHLAMAL), 271-310 (VEANYRLIRTYLSLSAELKDTNPKEAISFLERALDMSQRV), 317-350 (ADSLHALGNIYESMGDFRRALEYQKRFFEVARAA), 357-390 (KRASLCVASMQERMNMTDEAVHSLQCALELSEKA), and 397-430 (YRATMQLGQAYDSSGDHEKALMSYRANFGAARKL).

As to quaternary structure, interacts with TAX-1.

Its subcellular location is the cytoplasm. The protein resides in the cytoskeleton. It is found in the flagellum axoneme. Functionally, axonemal protein which is implicated in axonemal and/or peri-axonemal structure assembly and regulates flagellum assembly and beating. The sequence is that of Tetratricopeptide repeat protein 29 from Trypanosoma brucei brucei (strain 927/4 GUTat10.1).